A 430-amino-acid chain; its full sequence is Histidine--tRNA ligase (430 aa).

Belongs to the class-II aminoacyl-tRNA synthetase family. As to quaternary structure, homodimer.

It is found in the cytoplasm. The catalysed reaction is tRNA(His) + L-histidine + ATP = L-histidyl-tRNA(His) + AMP + diphosphate + H(+). In Chlamydia abortus (strain DSM 27085 / S26/3) (Chlamydophila abortus), this protein is Histidine--tRNA ligase.